A 218-amino-acid chain; its full sequence is Ras-related protein Rab-27B (218 aa).

At threonine 2 the chain carries N-acetylthreonine. 16 to 24 (GDSGVGKTT) lines the GTP pocket. Residues 38–46 (FITTVGIDF) carry the Effector region motif. GTP is bound by residues 74 to 78 (DTAGQ), 133 to 136 (NKAD), and 163 to 165 (SAA). A disulfide bridge connects residues cysteine 123 and cysteine 188. Residues cysteine 216 and cysteine 218 are each lipidated (S-geranylgeranyl cysteine). Cysteine 218 is modified (cysteine methyl ester).

Belongs to the small GTPase superfamily. Rab family. As to quaternary structure, interacts with SYTL2, SYTL4, MYRIP and MLPH. Interacts with RPH3A and RPH3A. Interacts (GDP-bound form preferentially) with DENND10.

It is found in the membrane. Its subcellular location is the late endosome. The enzyme catalyses GTP + H2O = GDP + phosphate + H(+). Regulated by guanine nucleotide exchange factors (GEFs) which promote the exchange of bound GDP for free GTP, GTPase activating proteins (GAPs) which increase the GTP hydrolysis activity, and GDP dissociation inhibitors which inhibit the dissociation of the nucleotide from the GTPase. Activated by GEFs such as DENND10. Its function is as follows. Small GTPase which cycles between active GTP-bound and inactive GDP-bound states. In its active state, binds to a variety of effector proteins to regulate homeostasis of late endocytic pathway, including endosomal positioning, maturation and secretion. Plays a role in NTRK2/TRKB axonal anterograde transport by facilitating the association of NTRK2/TRKB with KLC1. May be involved in targeting uroplakins to urothelial apical membranes. This chain is Ras-related protein Rab-27B (Rab27b), found in Rattus norvegicus (Rat).